Consider the following 539-residue polypeptide: MVKQLKFSEDARQAMLRGVDQLANAVKVTIGPKGRNVVLDKEFTAPLITNDGVTIAKEIELEDPYENMGAKLVQEVANKTNEIAGDGTTTATVLAQAMIQEGLKNVTSGANPVGLRQGIDKAVKVAVEALHENSQKVENKNEIAQVGAISAADEEIGRYISEATEKVGNDGVITIITIEESNRLNTELELGMQFDRGYQSPYMVTDSDKMVAELERPYILVTDKKISSFQDILPLLEQVVQSNRPILIVADEVEGDALTNIVLNRMRGTFTAVAVKAPGFGDRRKAMLEDLAILTGAQVITDDLGLDLKDASIDMLGTASKVEVTKDNTTVVDGDGDENSIDARVSQLKSQIEETESDFDREKLQERLAKLAGGVAVIKVGAASETELKERKLRIEDALNSTRAAVEEGIVAGGGTALVNVYQKVSENEAEGDIETGVNIVLKALTAPVRQIAENAGLEGSVIVERLKNAEPGVGFNGATNEWVNMLRRGIVDPTKVTRSALQHAASVAAMFLTTEAVVASIPEKNNDQPNMGGMPGMM.

Residues 29-32, 86-90, G414, and D493 each bind ATP; these read TIGP and DGTTT.

It belongs to the chaperonin (HSP60) family. As to quaternary structure, forms a cylinder of 14 subunits composed of two heptameric rings stacked back-to-back. Interacts with the co-chaperonin GroES.

The protein localises to the cytoplasm. The enzyme catalyses ATP + H2O + a folded polypeptide = ADP + phosphate + an unfolded polypeptide.. Its function is as follows. Together with its co-chaperonin GroES, plays an essential role in assisting protein folding. The GroEL-GroES system forms a nano-cage that allows encapsulation of the non-native substrate proteins and provides a physical environment optimized to promote and accelerate protein folding. This chain is Chaperonin GroEL, found in Staphylococcus aureus.